The primary structure comprises 86 residues: BolA-like protein 2 (86 aa).

Position 1 is an N-acetylmethionine (Met-1).

This sequence belongs to the BolA/IbaG family. As to quaternary structure, interacts with GLRX3; forms a heterotrimeric complex composed by two BOLA2 molecules and one GLRX3 molecule; linked by [2Fe-2S] clusters.

The protein localises to the cytoplasm. It localises to the nucleus. Acts as a cytosolic iron-sulfur (Fe-S) cluster assembly factor that facilitates [2Fe-2S] cluster insertion into a subset of cytosolic proteins. Acts together with the monothiol glutaredoxin GLRX3. The polypeptide is BolA-like protein 2 (Bola2) (Mus musculus (Mouse)).